We begin with the raw amino-acid sequence, 139 residues long: Large ribosomal subunit protein uL13c (139 aa).

It belongs to the universal ribosomal protein uL13 family. Part of the 50S ribosomal subunit.

The protein localises to the plastid. It localises to the chloroplast. This chain is Large ribosomal subunit protein uL13c, found in Trieres chinensis (Marine centric diatom).